The chain runs to 338 residues: Fructose-1,6-bisphosphatase class 1 (338 aa).

Glu90, Asp112, Leu114, and Asp115 together coordinate Mg(2+). Residues 115–118 (DGSS), Asn207, and Lys273 contribute to the substrate site. Residue Glu279 coordinates Mg(2+).

Belongs to the FBPase class 1 family. As to quaternary structure, homotetramer. Mg(2+) is required as a cofactor.

It is found in the cytoplasm. The catalysed reaction is beta-D-fructose 1,6-bisphosphate + H2O = beta-D-fructose 6-phosphate + phosphate. It functions in the pathway carbohydrate biosynthesis; gluconeogenesis. In Stenotrophomonas maltophilia (strain K279a), this protein is Fructose-1,6-bisphosphatase class 1.